The following is a 61-amino-acid chain: Cytotoxin 3 (61 aa).

Cystine bridges form between Cys3-Cys22, Cys15-Cys39, Cys43-Cys54, and Cys55-Cys60.

It belongs to the three-finger toxin family. Short-chain subfamily. Type IB cytotoxin sub-subfamily. As to expression, expressed by the venom gland.

The protein localises to the secreted. In terms of biological role, this protein lyses red blood cells and has cardiotoxic and hypotensive activities. The protein is Cytotoxin 3 of Hemachatus haemachatus (Rinkhals).